A 248-amino-acid polypeptide reads, in one-letter code: Ribonuclease 3 (248 aa).

The region spanning 6 to 136 (LAYLQTLIGS…LIGAIYLDKG (131 aa)) is the RNase III domain. Glu-49 provides a ligand contact to Mg(2+). Asp-53 is an active-site residue. Positions 122 and 125 each coordinate Mg(2+). Residue Glu-125 is part of the active site. One can recognise a DRBM domain in the interval 163-231 (NYKSCLIEYS…AKEAMERIIA (69 aa)).

It belongs to the ribonuclease III family. Homodimer. Mg(2+) is required as a cofactor.

The protein localises to the cytoplasm. It catalyses the reaction Endonucleolytic cleavage to 5'-phosphomonoester.. Its function is as follows. Digests double-stranded RNA. Involved in the processing of primary rRNA transcript to yield the immediate precursors to the large and small rRNAs (23S and 16S). Processes some mRNAs, and tRNAs when they are encoded in the rRNA operon. Processes pre-crRNA and tracrRNA of type II CRISPR loci if present in the organism. The protein is Ribonuclease 3 of Chlorobium chlorochromatii (strain CaD3).